Reading from the N-terminus, the 443-residue chain is MEFSTTLALFFTLSIFLVGAQAKVPVDDQFRVVNEGGYTDYSPIEYNPDVRGFVPFSDNFRLCFYNTTQNAYTLALRIGNRAQESTLRWVWEANRGSPVKENATLTFGEDGNLVLAEADGRVVWQTNTANKGVVGIKILENGNMVIYDSNGKFVWQSFDSPTDTLLVGQSLKLNGQNKLVSRLSPSVNANGPYSLVMEAKKLVLYYTTNKTPKPIGYYEYEFFTKIAQLQSMTFQAVEDADTTWGLHMEGVDSGSQFNVSTFLSRPKHNATLSFLRLESDGNIRVWSYSTLATSTAWDVTYTAFTNDNTDGNDECRIPEHCLGFGLCKKGQCNACPSDIGLLGWDETCKIPSLASCDPKTFHYFKIEGADSFMTKYNGGSTTTESACGDKCTRDCKCLGFFYNRKSSRCWLGYELKTLTKTGDTSLVAYVKAPNASKKSALAI.

Positions Met-1 to Ala-22 are cleaved as a signal peptide. One can recognise a Bulb-type lectin domain in the interval Gln-29–Asp-159. Asn-66, Asn-102, Asn-258, and Asn-269 each carry an N-linked (GlcNAc...) asparagine glycan. The WD repeat unit spans residues Gly-254 to Ala-296. A PAN domain is found at Cys-356–Pro-433. Intrachain disulfides connect Cys-387-Cys-409 and Cys-391-Cys-397. Residue Asn-434 is glycosylated (N-linked (GlcNAc...) asparagine).

It localises to the secreted. It is found in the cell wall. In Arabidopsis thaliana (Mouse-ear cress), this protein is EP1-like glycoprotein 4.